The primary structure comprises 284 residues: MRFVIITGLSGAGKTQALKAMEDMGFFCIDNFPPALIPKLADLFYQSKNIDKVALGMDLRGGQFFEDIYSSLDFLKKNNYDYEIVFLEASDEVLIKRFKETRRRHPLSEEGRIVDGINEERKRLSDIRKIANYIIDTSNLTSSQLKEELSNIFLKGKKFKGIIIDVMSFGYKYGIPLEADLVFDVRFLPNPFYIDELRPLTGNDEKVKEYVMKWEEAKEFLKKLGDMIKFLIPYYVREGKSQLVIAIGCTGGKHRSVAIANALYDLLKKEDYSVVVNHRDIGEE.

ATP is bound at residue 8-15; that stretch reads GLSGAGKT. Residue 58–61 coordinates GTP; the sequence is DLRG.

Belongs to the RapZ-like family.

Functionally, displays ATPase and GTPase activities. The polypeptide is Nucleotide-binding protein TTE1834 (Caldanaerobacter subterraneus subsp. tengcongensis (strain DSM 15242 / JCM 11007 / NBRC 100824 / MB4) (Thermoanaerobacter tengcongensis)).